The chain runs to 1328 residues: MESRDPAQPMSPGEATQSGARPADRYGLLKHSREFLDFFWDIAKPEQETRLAATEKLLEYLRGRPKGSEMKYALKRLITGLGVGRETARPCYSLALAQLLQSFEDLPLCSILQQIQEKYDLHQVKKAMLRPALFANLFGVLALFQSGRLVKDQEALMKSVKLLQALAQYQNHLQEQPRKALVDILSEVSKATLQEILPEVLKADLNIILSSPEQLELFLLAQQKVPSKLKKLVGSVNLFSDENVPRLVNVLKMAASSVKKDRKLPAIALDLLRLALKEDKFPRFWKEVVEQGLLKMQFWPASYLCFRLLGAALPLLTKEQLHLVMQGDVIRHYGEHVCTAKLPKQFKFAPEMDDYVGTFLEGCQDDPERQLAVLVAFSSVTNQGLPVTPTFWRVVRFLSPPALQGYVAWLRAMFLQPDLDSLVDFSTNNQKKAQDSSLHMPERAVFRLRKWIIFRLVSIVDSLHLEMEEALTEQVARFCLFHSFFVTKKPTSQIPETKHPFSFPLENQAREAVSSAFFSLLQTLSTQFKQAPGQTQGGQPWTYHLVQFADLLLNHSHNVTTVTPFTAQQRQAWDRMLQTLKELEAHSAEARAAAFQHLLLLVGIHLLKSPAESCDLLGDIQTCIRKSLGEKPRRSRTKTIDPQEPPWVEVLVEILLALLAQPSHLMRQVARSVFGHICSHLTPRALQLILDVLNPETSEDENDRVVVTDDSDERRLKGAEDKSEEGEDNRSSESEEESEGEESEEEERDGDVDQGFREQLMTVLQAGKALGGEDSENEEELGDEAMMALDQSLASLFAEQKLRIQARRDEKNKLQKEKALRRDFQIRVLDLVEVLVTKQPENALVLELLEPLLSIIRRSLRSSSSKQEQDLLHKTARIFTHHLCRARRYCHDLGERAGALHAQVERLVQQAGRQPDSPTALYHFNASLYLLRVLKGNTAEGCVHETQEKQKAGTDPSHMPTGPQAASCLDLNLVTRVYSTALSSFLTKRNSPLTVPMFLSLFSRHPVLCQSLLPILVQHITGPVRPRHQACLLLQKTLSMREVRSCFEDPEWKQLMGQVLAKVTENLRVLGEAQTKAQHQQALSSLELLNVLFRTCKHEKLTLDLTVLLGVLQGQQQSLQQGAHSTGSSRLHDLYWQAMKTLGVQRPKLEKKDAKEIPSATQSPISKKRKKKGFLPETKKRKKRKSEDGTPAEDGTPAATGGSQPPSMGRKKRNRTKAKVPAQANGTPTTKSPAPGAPTRSPSTPAKSPKLQKKNQKPSQVNGAPGSPTEPAGQKQHQKALPKKGVLGKSPLSALARKKARLSLVIRSPSLLQSGAKKKAQVRKAGKP.

The tract at residues 1-22 (MESRDPAQPMSPGEATQSGARP) is disordered. Residues 1–582 (MESRDPAQPM…WDRMLQTLKE (582 aa)) form an interaction with MYB region. Serine 11 carries the post-translational modification Phosphoserine. Lysine 71 and lysine 158 each carry N6-acetyllysine. 2 short sequence motifs (nuclear export signal) span residues 240-258 (SDENVPRLVNVLKMAASSV) and 263-281 (KLPAIALDLLRLALKEDKF). The interval 698–753 (SEDENDRVVVTDDSDERRLKGAEDKSEEGEDNRSSESEEESEGEESEEEERDGDVD) is disordered. Over residues 703 to 721 (DRVVVTDDSDERRLKGAED) the composition is skewed to basic and acidic residues. Residues 734-752 (SEEESEGEESEEEERDGDV) are compositionally biased toward acidic residues. Serine 775 is modified (phosphoserine). The interval 1146–1292 (RPKLEKKDAK…KKGVLGKSPL (147 aa)) is disordered. Basic and acidic residues predominate over residues 1147–1156 (PKLEKKDAKE). Lysine 1148 participates in a covalent cross-link: Glycyl lysine isopeptide (Lys-Gly) (interchain with G-Cter in SUMO2). Residues 1151-1328 (KKDAKEIPSA…KAQVRKAGKP (178 aa)) are required for nuclear and nucleolar localization. Phosphoserine is present on residues serine 1159 and serine 1163. Positions 1166–1184 (SKKRKKKGFLPETKKRKKR) are enriched in basic residues. Serine 1186 is modified (phosphoserine). Residues threonine 1190 and threonine 1196 each carry the phosphothreonine modification. The residue at position 1207 (serine 1207) is a Phosphoserine. Residues 1209 to 1218 (GRKKRNRTKA) show a composition bias toward basic residues. Serine 1232 is modified (phosphoserine). A Phosphothreonine modification is found at threonine 1239. Serine 1241 is modified (phosphoserine). Position 1244 is a phosphothreonine (threonine 1244). 2 positions are modified to phosphoserine: serine 1248 and serine 1267. Residue threonine 1269 is modified to Phosphothreonine. A phosphoserine mark is found at serine 1290 and serine 1303. A disordered region spans residues 1306 to 1328 (IRSPSLLQSGAKKKAQVRKAGKP). Residue arginine 1307 is modified to Citrulline. A phosphoserine mark is found at serine 1308, serine 1310, and serine 1314. The segment covering 1316–1328 (AKKKAQVRKAGKP) has biased composition (basic residues).

The protein belongs to the MYBBP1A family. As to quaternary structure, binds to and represses JUN and MYB via the leucine zipper regions present in these proteins. Also binds to and represses PPARGC1A: this interaction is abrogated when PPARGC1A is phosphorylated by MAPK1/ERK. Binds to and stimulates transcription by AHR. Binds to KPNA2. Interacts with CLOCK and CRY1. Component of the B-WICH complex, at least composed of SMARCA5/SNF2H, BAZ1B/WSTF, SF3B1, DEK, MYO1C, ERCC6, MYBBP1A and DDX21. In terms of processing, citrullinated by PADI4.

It is found in the cytoplasm. The protein resides in the nucleus. Its subcellular location is the nucleolus. Its function is as follows. May activate or repress transcription via interactions with sequence specific DNA-binding proteins. Repression may be mediated at least in part by histone deacetylase activity (HDAC activity). Acts as a corepressor and in concert with CRY1, represses the transcription of the core circadian clock component PER2. Preferentially binds to dimethylated histone H3 'Lys-9' (H3K9me2) on the PER2 promoter. Has a role in rRNA biogenesis together with PWP1. This chain is Myb-binding protein 1A (MYBBP1A), found in Homo sapiens (Human).